The chain runs to 467 residues: H(+)/Cl(-) exchange transporter ClcA (467 aa).

Residues 1–30 (MKSQTIPTRRVRGFRRAAVIRQLLSRDKTP) lie on the Cytoplasmic side of the membrane. A helical transmembrane segment spans residues 31–67 (LTILLLASLTGVLAGLAGVAFEKAVAWVTAHRIEGLA). Over 68-74 (QVAHIPW) the chain is Periplasmic. The helical transmembrane segment at 75-98 (LVWLLAFLFSALLAMVGYFLVRRF) threads the bilayer. Residues 99 to 106 (APEAGGSG) are Cytoplasmic-facing. A Selectivity filter part_1 motif is present at residues 104 to 108 (GSGIP). S105 serves as a coordination point for chloride. An intramembrane region (helical) is located at residues 107–114 (IPEIEGAL). The Cytoplasmic portion of the chain corresponds to 115–121 (EELRPVR). The chain crosses the membrane as a helical span at residues 122-139 (WWRVLPVKFFGGMGTLGA). The Periplasmic portion of the chain corresponds to 140-145 (GMVLGR). The short motif at 144–148 (GREGP) is the Selectivity filter part_2 element. The chain crosses the membrane as a helical span at residues 146–164 (EGPMVQMGGNIGRMVLDIF). The Cytoplasmic segment spans residues 165-174 (HRPDAEARHT). Intramembrane regions (helical) lie at residues 175–187 (LLAT…LAAA) and 191–199 (PLAGILFII). The Cytoplasmic portion of the chain corresponds to 200-212 (EEMRTQFHYNLIS). Residues 213–230 (IKAVFTGVIMSTIVFRIF) traverse the membrane as a helical segment. Topologically, residues 231-250 (NGEKSVIEVGQLTDAPVYTL) are periplasmic. A helical transmembrane segment spans residues 251–279 (WLYLLLGIIFGAVGPLFNRLVLGMQDVFA). At 280–285 (RIHGGN) the chain is on the cytoplasmic side. A helical membrane pass occupies residues 286 to 307 (TTRWVLLGGAIGGACGLLALWE). The Periplasmic portion of the chain corresponds to 308-327 (PAAAGGGFGLIPIAAAGNFT). The helical transmembrane segment at 328–347 (VGMLLFIFIARVVTTVFCFS) threads the bilayer. The Cytoplasmic segment spans residues 348 to 352 (SGAPG). The Selectivity filter part_3 motif lies at 353–357 (GIFAP). Residues 353–374 (GIFAPMLALGTLLGSAFGMACA) traverse the membrane as a helical segment. Chloride is bound by residues I354 and F355. Residues 375–384 (AWFPQWHLQA) lie on the Periplasmic side of the membrane. The segment at residues 385 to 399 (GTFAIAGMGALLAAS) is an intramembrane region (helical). Residues 400–402 (VRA) constitute an intramembrane region (note=Loop between two helices). An intramembrane region (helical) is located at residues 403 to 414 (PITGIVLVLEMT). An intramembrane region (note=Loop between two helices) is located at residues 415-419 (DNYQL). The chain crosses the membrane as a helical span at residues 420-436 (ILPMIITCLGATLLAQF). The Cytoplasmic segment spans residues 437-467 (LGGKPLYSTILARTLAKQEAERQAQADGRNT). Y443 is a chloride binding site.

The protein belongs to the chloride channel (TC 2.A.49) family. ClcA subfamily. Homodimer.

The protein localises to the cell inner membrane. It catalyses the reaction 2 chloride(in) + H(+)(out) = 2 chloride(out) + H(+)(in). Proton-coupled chloride transporter. Functions as antiport system and exchanges two chloride ions for 1 proton. Probably acts as an electrical shunt for an outwardly-directed proton pump that is linked to amino acid decarboxylation, as part of the extreme acid resistance (XAR) response. The sequence is that of H(+)/Cl(-) exchange transporter ClcA from Cronobacter sakazakii (strain ATCC BAA-894) (Enterobacter sakazakii).